The following is a 162-amino-acid chain: uncharacterized protein (162 aa).

In terms of domain architecture, PUA spans 78–154 (KNLVVVDIGA…KAIKNLHYVG (77 aa)).

This is an uncharacterized protein from Methanocaldococcus jannaschii (strain ATCC 43067 / DSM 2661 / JAL-1 / JCM 10045 / NBRC 100440) (Methanococcus jannaschii).